Consider the following 1042-residue polypeptide: Isoleucine--tRNA ligase (1042 aa).

A 'HIGH' region motif is present at residues 59 to 69 (PFANGLPHYGH). A 'KMSKS' region motif is present at residues 619-623 (KMSKS). K622 contacts ATP.

Belongs to the class-I aminoacyl-tRNA synthetase family. IleS type 2 subfamily. As to quaternary structure, monomer. The cofactor is Zn(2+).

Its subcellular location is the cytoplasm. The enzyme catalyses tRNA(Ile) + L-isoleucine + ATP = L-isoleucyl-tRNA(Ile) + AMP + diphosphate. Its function is as follows. Catalyzes the attachment of isoleucine to tRNA(Ile). As IleRS can inadvertently accommodate and process structurally similar amino acids such as valine, to avoid such errors it has two additional distinct tRNA(Ile)-dependent editing activities. One activity is designated as 'pretransfer' editing and involves the hydrolysis of activated Val-AMP. The other activity is designated 'posttransfer' editing and involves deacylation of mischarged Val-tRNA(Ile). In Nocardia farcinica (strain IFM 10152), this protein is Isoleucine--tRNA ligase.